A 904-amino-acid chain; its full sequence is Leucine--tRNA ligase (904 aa).

The short motif at 49–59 is the 'HIGH' region element; it reads PYPSGDLHIGH. The short motif at 663–667 is the 'KMSKS' region element; that stretch reads TMSKS. Residue K666 participates in ATP binding.

It belongs to the class-I aminoacyl-tRNA synthetase family.

It is found in the cytoplasm. The catalysed reaction is tRNA(Leu) + L-leucine + ATP = L-leucyl-tRNA(Leu) + AMP + diphosphate. This is Leucine--tRNA ligase from Roseiflexus castenholzii (strain DSM 13941 / HLO8).